The chain runs to 329 residues: DNA-directed RNA polymerase subunit alpha (329 aa).

Residues 1–235 are alpha N-terminal domain (alpha-NTD); that stretch reads MQGSVTEFLK…EQLEAFVDLR (235 aa). Positions 249–329 are alpha C-terminal domain (alpha-CTD); the sequence is FDPILLRPVD…NWPPASIADE (81 aa).

Belongs to the RNA polymerase alpha chain family. In terms of assembly, homodimer. The RNAP catalytic core consists of 2 alpha, 1 beta, 1 beta' and 1 omega subunit. When a sigma factor is associated with the core the holoenzyme is formed, which can initiate transcription.

The enzyme catalyses RNA(n) + a ribonucleoside 5'-triphosphate = RNA(n+1) + diphosphate. Functionally, DNA-dependent RNA polymerase catalyzes the transcription of DNA into RNA using the four ribonucleoside triphosphates as substrates. The sequence is that of DNA-directed RNA polymerase subunit alpha from Yersinia pestis bv. Antiqua (strain Antiqua).